The following is a 109-amino-acid chain: ATP-dependent Clp protease adapter protein ClpS 2 (109 aa).

Residues Met1–Arg24 are disordered.

The protein belongs to the ClpS family. Binds to the N-terminal domain of the chaperone ClpA.

Its function is as follows. Involved in the modulation of the specificity of the ClpAP-mediated ATP-dependent protein degradation. The sequence is that of ATP-dependent Clp protease adapter protein ClpS 2 from Rhodopseudomonas palustris (strain ATCC BAA-98 / CGA009).